Reading from the N-terminus, the 81-residue chain is Photosystem I iron-sulfur center (81 aa).

4Fe-4S ferredoxin-type domains are found at residues 2 to 31 and 39 to 68; these read SHTV…MIPW and IASS…VRVY. [4Fe-4S] cluster is bound by residues C11, C14, C17, C21, C48, C51, C54, and C58.

As to quaternary structure, the eukaryotic PSI reaction center is composed of at least 11 subunits. It depends on [4Fe-4S] cluster as a cofactor.

The protein localises to the plastid. It localises to the chloroplast thylakoid membrane. The enzyme catalyses reduced [plastocyanin] + hnu + oxidized [2Fe-2S]-[ferredoxin] = oxidized [plastocyanin] + reduced [2Fe-2S]-[ferredoxin]. In terms of biological role, apoprotein for the two 4Fe-4S centers FA and FB of photosystem I (PSI); essential for photochemical activity. FB is the terminal electron acceptor of PSI, donating electrons to ferredoxin. The C-terminus interacts with PsaA/B/D and helps assemble the protein into the PSI complex. Required for binding of PsaD and PsaE to PSI. PSI is a plastocyanin-ferredoxin oxidoreductase, converting photonic excitation into a charge separation, which transfers an electron from the donor P700 chlorophyll pair to the spectroscopically characterized acceptors A0, A1, FX, FA and FB in turn. The protein is Photosystem I iron-sulfur center of Chaetosphaeridium globosum (Charophycean green alga).